A 357-amino-acid polypeptide reads, in one-letter code: Dihydroorotate dehydrogenase (quinone) (357 aa).

FMN is bound by residues 67 to 71 (AGFDK) and T91. K71 contacts substrate. 116 to 120 (NRMGF) is a binding site for substrate. FMN is bound by residues N153 and N186. Residue N186 participates in substrate binding. The active-site Nucleophile is the S189. Substrate is bound at residue N191. K228 and T256 together coordinate FMN. Substrate is bound at residue 257-258 (NT). FMN is bound by residues G282, G311, and 332–333 (YT).

It belongs to the dihydroorotate dehydrogenase family. Type 2 subfamily. As to quaternary structure, monomer. The cofactor is FMN.

The protein localises to the cell membrane. It carries out the reaction (S)-dihydroorotate + a quinone = orotate + a quinol. It functions in the pathway pyrimidine metabolism; UMP biosynthesis via de novo pathway; orotate from (S)-dihydroorotate (quinone route): step 1/1. In terms of biological role, catalyzes the conversion of dihydroorotate to orotate with quinone as electron acceptor. The chain is Dihydroorotate dehydrogenase (quinone) from Arthrobacter sp. (strain FB24).